Reading from the N-terminus, the 501-residue chain is Inactive cytidine monophosphate-N-acetylneuraminic acid hydroxylase (501 aa).

It belongs to the CMP-Neu5Ac hydroxylase family. In terms of tissue distribution, widely expressed. Highly expressed in thymus. Not expressed in brain. May be expressed in adult stem cells (at protein level).

The protein resides in the cytoplasm. Functionally, sialic acids are components of carbohydrate chains of glycoconjugates and are involved in cell-cell recognition and cell-pathogen interactions. That protein has no CMP-N-acetylneuraminate monooxygenase activity and is not able to convert CMP-N-acetylneuraminic acid (CMP-Neu5Ac) into its hydroxylated derivative CMP-N-glycolylneuraminic acid (CMP-Neu5Gc), a sialic acid abundantly expressed at the surface of many cells in vertebrates. However, it may play a role in Wnt signaling. This chain is Inactive cytidine monophosphate-N-acetylneuraminic acid hydroxylase (CMAHP), found in Homo sapiens (Human).